We begin with the raw amino-acid sequence, 765 residues long: Probable beta-glucosidase M (765 aa).

Positions 1–19 are cleaved as a signal peptide; the sequence is MHSISALLSLLGGLALSSA. N-linked (GlcNAc...) asparagine glycans are attached at residues Asn-24, Asn-71, Asn-93, Asn-126, and Asn-258. Asp-286 is an active-site residue. N-linked (GlcNAc...) asparagine glycans are attached at residues Asn-314, Asn-321, Asn-432, Asn-519, Asn-541, and Asn-647.

The protein belongs to the glycosyl hydrolase 3 family.

The protein localises to the secreted. It catalyses the reaction Hydrolysis of terminal, non-reducing beta-D-glucosyl residues with release of beta-D-glucose.. Its pathway is glycan metabolism; cellulose degradation. In terms of biological role, beta-glucosidases are one of a number of cellulolytic enzymes involved in the degradation of cellulosic biomass. Catalyzes the last step releasing glucose from the inhibitory cellobiose. The protein is Probable beta-glucosidase M (bglM) of Aspergillus niger (strain ATCC MYA-4892 / CBS 513.88 / FGSC A1513).